Consider the following 762-residue polypeptide: Acyl-homoserine lactone acylase PvdQ (762 aa).

Residues M1–A23 form the signal peptide. Residues A194–G216 constitute a propeptide, spacer peptide. Catalysis depends on S217, which acts as the Nucleophile.

Belongs to the peptidase S45 family. In terms of assembly, heterodimer of an alpha subunit and a beta subunit processed from the same precursor.

It localises to the periplasm. It catalyses the reaction an N-acyl-L-homoserine lactone + H2O = L-homoserine lactone + a carboxylate. Catalyzes the deacylation of acyl-homoserine lactone (AHL or acyl-HSL), releasing homoserine lactone (HSL) and the corresponding fatty acid. Possesses a specificity for the degradation of long-chain acyl-HSLs (side chains of 11 to 14 carbons in length). Degrades 3-oxo-C12-HSL, one of the two main AHL signal molecules of P.aeruginosa, and thereby functions as a quorum quencher, inhibiting the las quorum-sensing system. Therefore, may enable P.aeruginosa to modulate its own quorum-sensing-dependent pathogenic potential. Also appears to be required for pyoverdin biosynthesis. In Pseudomonas aeruginosa (strain ATCC 15692 / DSM 22644 / CIP 104116 / JCM 14847 / LMG 12228 / 1C / PRS 101 / PAO1), this protein is Acyl-homoserine lactone acylase PvdQ (pvdQ).